A 273-amino-acid polypeptide reads, in one-letter code: Shikimate dehydrogenase (NADP(+)) (273 aa).

Residues 18-20 (SKS) and Thr-65 contribute to the shikimate site. The active-site Proton acceptor is the Lys-69. Glu-81 lines the NADP(+) pocket. Shikimate-binding residues include Asn-90 and Asp-105. NADP(+) contacts are provided by residues 130 to 134 (GAGGA), 154 to 159 (NRTHSK), and Met-217. A shikimate-binding site is contributed by Tyr-219. Gly-240 contacts NADP(+).

It belongs to the shikimate dehydrogenase family. Homodimer.

It carries out the reaction shikimate + NADP(+) = 3-dehydroshikimate + NADPH + H(+). Its pathway is metabolic intermediate biosynthesis; chorismate biosynthesis; chorismate from D-erythrose 4-phosphate and phosphoenolpyruvate: step 4/7. Functionally, involved in the biosynthesis of the chorismate, which leads to the biosynthesis of aromatic amino acids. Catalyzes the reversible NADPH linked reduction of 3-dehydroshikimate (DHSA) to yield shikimate (SA). This chain is Shikimate dehydrogenase (NADP(+)), found in Herminiimonas arsenicoxydans.